Reading from the N-terminus, the 136-residue chain is ATP synthase epsilon chain (136 aa).

Positions 104–136 (AGMEGQPASPEKVKAQQQLNEARARMQASKSAD) are disordered.

The protein belongs to the ATPase epsilon chain family. As to quaternary structure, F-type ATPases have 2 components, CF(1) - the catalytic core - and CF(0) - the membrane proton channel. CF(1) has five subunits: alpha(3), beta(3), gamma(1), delta(1), epsilon(1). CF(0) has three main subunits: a, b and c.

It is found in the cellular thylakoid membrane. In terms of biological role, produces ATP from ADP in the presence of a proton gradient across the membrane. This chain is ATP synthase epsilon chain, found in Synechococcus sp. (strain CC9902).